The primary structure comprises 513 residues: uncharacterized protein (513 aa).

Disordered stretches follow at residues Gly72–Phe113 and Ile155–Phe262. Low complexity predominate over residues Ala82–Thr106. Composition is skewed to polar residues over residues Glu164–Gly189 and Thr210–Gln228. Over residues Thr229–Ser238 the composition is skewed to low complexity. Over residues Thr239–Ser248 the composition is skewed to pro residues. The segment covering Gly253–Phe262 has biased composition (polar residues). An RING-type; atypical zinc finger spans residues Cys396 to Arg437. A disordered region spans residues Pro439–Glu513. Positions Pro442–Ser493 are enriched in polar residues.

This is an uncharacterized protein from Schizosaccharomyces pombe (strain 972 / ATCC 24843) (Fission yeast).